The primary structure comprises 115 residues: Large ribosomal subunit protein bL20 (115 aa).

Belongs to the bacterial ribosomal protein bL20 family.

In terms of biological role, binds directly to 23S ribosomal RNA and is necessary for the in vitro assembly process of the 50S ribosomal subunit. It is not involved in the protein synthesizing functions of that subunit. The protein is Large ribosomal subunit protein bL20 of Borrelia hermsii (strain HS1 / DAH).